The sequence spans 174 residues: MTLILGIDPGSRITGYGVVRQTARGCEYVASGCIRTGSGELHERLQIVFRGVSEIIAQHGPVTMGIERVFMARNPDSALKLGQARGAAIVAAAEAGLEIAEYSATQVKQAVAGTGGANKEQVMLMVMHLLKLTQKPQIDASDALAIALCHAHTRSSLVPHGLATARRRGGRLRL.

Residues D8, E67, and D139 contribute to the active site. Residues D8, E67, and D139 each contribute to the Mg(2+) site.

It belongs to the RuvC family. In terms of assembly, homodimer which binds Holliday junction (HJ) DNA. The HJ becomes 2-fold symmetrical on binding to RuvC with unstacked arms; it has a different conformation from HJ DNA in complex with RuvA. In the full resolvosome a probable DNA-RuvA(4)-RuvB(12)-RuvC(2) complex forms which resolves the HJ. Mg(2+) serves as cofactor.

The protein localises to the cytoplasm. The enzyme catalyses Endonucleolytic cleavage at a junction such as a reciprocal single-stranded crossover between two homologous DNA duplexes (Holliday junction).. In terms of biological role, the RuvA-RuvB-RuvC complex processes Holliday junction (HJ) DNA during genetic recombination and DNA repair. Endonuclease that resolves HJ intermediates. Cleaves cruciform DNA by making single-stranded nicks across the HJ at symmetrical positions within the homologous arms, yielding a 5'-phosphate and a 3'-hydroxyl group; requires a central core of homology in the junction. The consensus cleavage sequence is 5'-(A/T)TT(C/G)-3'. Cleavage occurs on the 3'-side of the TT dinucleotide at the point of strand exchange. HJ branch migration catalyzed by RuvA-RuvB allows RuvC to scan DNA until it finds its consensus sequence, where it cleaves and resolves the cruciform DNA. This chain is Crossover junction endodeoxyribonuclease RuvC, found in Pseudomonas putida (strain W619).